The following is a 77-amino-acid chain: Small ribosomal subunit protein bS21 (77 aa).

This sequence belongs to the bacterial ribosomal protein bS21 family.

The protein is Small ribosomal subunit protein bS21 of Methylococcus capsulatus (strain ATCC 33009 / NCIMB 11132 / Bath).